A 155-amino-acid polypeptide reads, in one-letter code: Large ribosomal subunit protein uL16 (155 aa).

This sequence belongs to the universal ribosomal protein uL16 family. Part of the 50S ribosomal subunit.

Binds 23S rRNA and is also seen to make contacts with the A and possibly P site tRNAs. The chain is Large ribosomal subunit protein uL16 from Synechococcus sp. (strain CC9311).